A 236-amino-acid chain; its full sequence is tRNA (guanine-N(7)-)-methyltransferase (236 aa).

Positions 68, 93, 120, and 143 each coordinate S-adenosyl-L-methionine. Residue D143 is part of the active site. Residues K147, D179, and T212–E215 contribute to the substrate site.

The protein belongs to the class I-like SAM-binding methyltransferase superfamily. TrmB family.

It carries out the reaction guanosine(46) in tRNA + S-adenosyl-L-methionine = N(7)-methylguanosine(46) in tRNA + S-adenosyl-L-homocysteine. It functions in the pathway tRNA modification; N(7)-methylguanine-tRNA biosynthesis. Functionally, catalyzes the formation of N(7)-methylguanine at position 46 (m7G46) in tRNA. This Nitrosococcus oceani (strain ATCC 19707 / BCRC 17464 / JCM 30415 / NCIMB 11848 / C-107) protein is tRNA (guanine-N(7)-)-methyltransferase.